A 335-amino-acid polypeptide reads, in one-letter code: Lipoyl synthase (335 aa).

Residues cysteine 55, cysteine 60, cysteine 66, cysteine 81, cysteine 85, cysteine 88, and serine 292 each contribute to the [4Fe-4S] cluster site. The Radical SAM core domain occupies 67 to 281 (WEDREATFLI…SQRAEEIGFQ (215 aa)).

Belongs to the radical SAM superfamily. Lipoyl synthase family. It depends on [4Fe-4S] cluster as a cofactor.

It localises to the cytoplasm. The catalysed reaction is [[Fe-S] cluster scaffold protein carrying a second [4Fe-4S](2+) cluster] + N(6)-octanoyl-L-lysyl-[protein] + 2 oxidized [2Fe-2S]-[ferredoxin] + 2 S-adenosyl-L-methionine + 4 H(+) = [[Fe-S] cluster scaffold protein] + N(6)-[(R)-dihydrolipoyl]-L-lysyl-[protein] + 4 Fe(3+) + 2 hydrogen sulfide + 2 5'-deoxyadenosine + 2 L-methionine + 2 reduced [2Fe-2S]-[ferredoxin]. Its pathway is protein modification; protein lipoylation via endogenous pathway; protein N(6)-(lipoyl)lysine from octanoyl-[acyl-carrier-protein]: step 2/2. Its function is as follows. Catalyzes the radical-mediated insertion of two sulfur atoms into the C-6 and C-8 positions of the octanoyl moiety bound to the lipoyl domains of lipoate-dependent enzymes, thereby converting the octanoylated domains into lipoylated derivatives. In Micrococcus luteus (strain ATCC 4698 / DSM 20030 / JCM 1464 / CCM 169 / CCUG 5858 / IAM 1056 / NBRC 3333 / NCIMB 9278 / NCTC 2665 / VKM Ac-2230) (Micrococcus lysodeikticus), this protein is Lipoyl synthase.